Consider the following 637-residue polypeptide: Biosynthetic arginine decarboxylase (637 aa).

K101 carries the post-translational modification N6-(pyridoxal phosphate)lysine. 286–296 is a substrate binding site; that stretch reads FDVGGGLAVDY.

This sequence belongs to the Orn/Lys/Arg decarboxylase class-II family. SpeA subfamily. Mg(2+) is required as a cofactor. The cofactor is pyridoxal 5'-phosphate.

It catalyses the reaction L-arginine + H(+) = agmatine + CO2. Its pathway is amine and polyamine biosynthesis; agmatine biosynthesis; agmatine from L-arginine: step 1/1. Functionally, catalyzes the biosynthesis of agmatine from arginine. The sequence is that of Biosynthetic arginine decarboxylase from Shewanella sp. (strain MR-7).